We begin with the raw amino-acid sequence, 590 residues long: Probable metalloendopeptidase G1-type (590 aa).

H41 is a Zn(2+) binding site. E44 is a catalytic residue. A Zn(2+)-binding site is contributed by H45.

This sequence belongs to the peptidase M44 family. It depends on Zn(2+) as a cofactor.

Its function is as follows. Seems to be involved in viral proteins maturation by cleavage at Ala-Gly-|-Xaa motifs. This chain is Probable metalloendopeptidase G1-type (GP045L), found in Oryctolagus cuniculus (Rabbit).